Reading from the N-terminus, the 122-residue chain is Large ribosomal subunit protein bL12 (122 aa).

Belongs to the bacterial ribosomal protein bL12 family. In terms of assembly, homodimer. Part of the ribosomal stalk of the 50S ribosomal subunit. Forms a multimeric L10(L12)X complex, where L10 forms an elongated spine to which 2 to 4 L12 dimers bind in a sequential fashion. Binds GTP-bound translation factors.

Forms part of the ribosomal stalk which helps the ribosome interact with GTP-bound translation factors. Is thus essential for accurate translation. The polypeptide is Large ribosomal subunit protein bL12 (Stenotrophomonas maltophilia (strain K279a)).